A 234-amino-acid chain; its full sequence is Probable cyclic nucleotide phosphodiesterase Rmag_0669 (234 aa).

Residues Asp11, His13, Asp49, Asn79, His145, His184, and His186 each coordinate Fe cation. AMP is bound by residues His13, Asp49, and 79-80 (NH). Residue His186 participates in AMP binding.

The protein belongs to the cyclic nucleotide phosphodiesterase class-III family. Fe(2+) is required as a cofactor.

In Ruthia magnifica subsp. Calyptogena magnifica, this protein is Probable cyclic nucleotide phosphodiesterase Rmag_0669.